Consider the following 142-residue polypeptide: uncharacterized protein (142 aa).

In terms of domain architecture, N-acetyltransferase spans 1-120 (MADKFDANDE…TILKWEKNMD (120 aa)).

It belongs to the acetyltransferase family.

This is an uncharacterized protein from Streptococcus pyogenes serotype M1.